The primary structure comprises 248 residues: uncharacterized protein (248 aa).

Residues 104-122 (CDVAACVGATWIAGGFAGA) form a helical membrane-spanning segment.

The protein localises to the membrane. This is an uncharacterized protein from Escherichia coli (strain K12).